Reading from the N-terminus, the 78-residue chain is DNA-directed RNA polymerase subunit Rpo5 (78 aa).

Belongs to the archaeal Rpo5/eukaryotic RPB5 RNA polymerase subunit family. In terms of assembly, part of the RNA polymerase complex.

The protein localises to the cytoplasm. It carries out the reaction RNA(n) + a ribonucleoside 5'-triphosphate = RNA(n+1) + diphosphate. Its function is as follows. DNA-dependent RNA polymerase (RNAP) catalyzes the transcription of DNA into RNA using the four ribonucleoside triphosphates as substrates. This Methanosarcina mazei (strain ATCC BAA-159 / DSM 3647 / Goe1 / Go1 / JCM 11833 / OCM 88) (Methanosarcina frisia) protein is DNA-directed RNA polymerase subunit Rpo5.